The sequence spans 450 residues: Keratin, type I cytoskeletal 25 (450 aa).

A disordered region spans residues Met-1–Ser-24. Residues Met-1 to Asn-78 form a head region. A coil 1A region spans residues Glu-79–Trp-114. The IF rod domain occupies Glu-79–Cys-394. Positions Tyr-115–Ile-136 are linker 1. A coil 1B region spans residues Ile-137–Leu-228. The tract at residues Gln-229–Leu-251 is linker 12. The interval Leu-252–Asp-390 is coil 2. The segment at Asp-391–Asn-450 is tail. Ser-442 bears the Phosphoserine mark.

It belongs to the intermediate filament family. In terms of assembly, heterodimer of a type I and a type II keratin. Heterodimer with type II keratin KRT5 leading to the formation of keratin intermediate filament (KIF) network. Interacts with KRT6A to form filaments. Expressed in skin and wool follicle. Expression localized to the inner root sheath of wool follicle.

Its subcellular location is the cytoplasm. In terms of biological role, essential for the proper assembly of type I and type II keratin protein complexes and formation of keratin intermediate filaments in the inner root sheath (irs). Plays a role in the cytoskeleton organization. The protein is Keratin, type I cytoskeletal 25 of Ovis aries (Sheep).